The primary structure comprises 152 residues: Nucleoside diphosphate kinase A 1 (152 aa).

ATP is bound by residues Lys12, Phe60, Arg88, Thr94, Arg105, and Asn115. His118 (pros-phosphohistidine intermediate) is an active-site residue.

The protein belongs to the NDK family. As to quaternary structure, homohexamer. Mg(2+) is required as a cofactor. The N-terminus is blocked.

The protein localises to the cytoplasm. It is found in the cell membrane. It localises to the nucleus. The catalysed reaction is a 2'-deoxyribonucleoside 5'-diphosphate + ATP = a 2'-deoxyribonucleoside 5'-triphosphate + ADP. It catalyses the reaction a ribonucleoside 5'-diphosphate + ATP = a ribonucleoside 5'-triphosphate + ADP. Autophosphorylation at His-118 increases serine/threonine protein kinase activity of the enzyme. Interaction with the SET complex inhibits exonuclease activity. Functionally, major role in the synthesis of nucleoside triphosphates other than ATP. Possesses nucleoside-diphosphate kinase, serine/threonine-specific protein kinase, geranyl and farnesyl pyrophosphate kinase, histidine protein kinase and 3'-5' exonuclease activities. Involved in cell proliferation, differentiation and development, signal transduction, G protein-coupled receptor endocytosis, and gene expression. Required for neural development including neural patterning and cell fate determination. The polypeptide is Nucleoside diphosphate kinase A 1 (NME1-1) (Bos taurus (Bovine)).